Consider the following 292-residue polypeptide: Xanthine dehydrogenase FAD-binding subunit (292 aa).

The FAD-binding PCMH-type domain occupies 1-176 (MFDFASYHRA…VAFHFPPQPK (176 aa)). FAD-binding positions include 27–34 (KLLAGGTD), 109–113 (ATYGG), Ile-165, and Phe-184.

As to quaternary structure, heterotrimer of XdhA, XdhB and XdhC. The cofactor is FAD.

The catalysed reaction is xanthine + NAD(+) + H2O = urate + NADH + H(+). The enzyme catalyses hypoxanthine + NAD(+) + H2O = xanthine + NADH + H(+). The protein operates within purine metabolism; hypoxanthine degradation; urate from hypoxanthine: step 1/2. It functions in the pathway purine metabolism; hypoxanthine degradation; urate from hypoxanthine: step 2/2. In terms of biological role, presumed to be a dehydrogenase, but possibly an oxidase. Participates in limited purine salvage (requires aspartate) but does not support aerobic growth on purines as the sole carbon source (purine catabolism). This Escherichia coli O157:H7 protein is Xanthine dehydrogenase FAD-binding subunit (xdhB).